A 411-amino-acid chain; its full sequence is Zinc finger protein draculin (411 aa).

Residues 1 to 33 (MKNTTKPCRTEHHNAEGQRDRMEGNKKGETKAK) are disordered. Over residues 8 to 32 (CRTEHHNAEGQRDRMEGNKKGETKA) the composition is skewed to basic and acidic residues. 13 C2H2-type zinc fingers span residues 36-58 (VACSHCKKRFSHKAHLQIHMRVH), 64-86 (YRCDQCGKCFPYKQSLKLHLDIH), 92-114 (YTCDECGESFKTRLQLRSHMTLH), 120-142 (YKCDQCEKSYGREDHLQRHMKLH), 148-170 (HKCEHCGKSFPMRDLLRSHLMVH), 176-198 (YTCDQCGKGFTLKKSYNEHMNIH), 204-226 (YTCDQCGKGFPYEQSLNLHMRFH), 232-254 (FTCDQCGQSFSQKGAYNIHMKIH), 260-282 (YTCDQCGMSFRHGYSLKLHMTHH), 288-310 (FHCDQCDKCYSTALFLKNHIKTH), 316-338 (YSCLTCGKTFNQLRGLRLHEKRH), 344-366 (FMCFDCGKCYFTDTELKQHLPVH), and 372-394 (YMCSLCFKSFPRMGSLIVHEKTH).

As to expression, specifically expressed in the hematopoietic lineage during embryogenesis; first expressed at the late blastula stage around the blastoderm margin. During gastrulation, restricted to the ventral mesoderm, the presumptive prechordal plate and the dorso-marginal cells of the organizer. At the 3-somite stage, strongly expressed in a caudal domain (marking the erythroid lineage) and a cephalic domain of the lateral mesoderm. At the 8- to 10-somite stage, caudal expression is in two bands of lateral mesoderm which later converge at the midline. Anterior expression is also in two bands of lateral mesoderm which converge as two patches at the midline by the 15-somite stage, with increased scattering of single cells (macrophage precursors) away from the midline to the yolksac. Once at the yolksac, expression is lost. By 20-24 hours post-fertilization (hpf), expressed in proerythroblasts in the erythroid blood island centered above the uro-genital opening. Expression persists in circulating erythroblasts but is lost in mature erythrocytes.

This Danio rerio (Zebrafish) protein is Zinc finger protein draculin.